The sequence spans 621 residues: Glucose 1,6-bisphosphate synthase (621 aa).

2 residues coordinate alpha-D-glucose 1,6-bisphosphate: arginine 73 and serine 175. Serine 175 acts as the Phosphoserine intermediate in catalysis. Residues serine 175, aspartate 332, aspartate 334, and aspartate 336 each contribute to the Mg(2+) site. At serine 175 the chain carries Phosphoserine. The alpha-D-glucose 1,6-bisphosphate site is built by aspartate 336, arginine 337, glutamate 433, serine 435, and lysine 447.

It belongs to the phosphohexose mutase family. As to expression, expressed at highest levels in the brain and testis, at intermediate levels in thymus, spleen, lung and skeletal muscle, and at lowest levels in kidney, liver and heart.

Its subcellular location is the cytoplasm. The protein localises to the cytosol. The enzyme catalyses (2R)-3-phospho-glyceroyl phosphate + alpha-D-glucose 1-phosphate = alpha-D-glucose 1,6-bisphosphate + (2R)-3-phosphoglycerate + H(+). It catalyses the reaction alpha-D-glucose 6-phosphate + (2R)-3-phospho-glyceroyl phosphate = alpha-D-glucose 1,6-bisphosphate + (2R)-3-phosphoglycerate + H(+). It carries out the reaction (2R)-3-phospho-glyceroyl phosphate + alpha-D-ribose 1-phosphate = alpha-D-ribose 1,5-bisphosphate + (2R)-3-phosphoglycerate + H(+). The catalysed reaction is 2-deoxy-alpha-D-ribose 1-phosphate + (2R)-3-phospho-glyceroyl phosphate = 2-deoxy-alpha-D-ribose 1,5-bisphosphate + (2R)-3-phosphoglycerate + H(+). The enzyme catalyses (2R)-3-phospho-glyceroyl phosphate + alpha-D-mannose 1-phosphate = alpha-D-mannose 1,6-bisphosphate + (2R)-3-phosphoglycerate + H(+). Its function is as follows. Glucose 1,6-bisphosphate synthase using 1,3-bisphosphoglycerate as a phosphate donor and a series of 1-phosphate sugars, including glucose 1-phosphate, mannose 1-phosphate, ribose 1-phosphate and deoxyribose 1-phosphate, as acceptors. In vitro, also exhibits very low phosphopentomutase and phosphoglucomutase activity which are most probably not physiologically relevant. This chain is Glucose 1,6-bisphosphate synthase, found in Mus musculus (Mouse).